Reading from the N-terminus, the 326-residue chain is Phospho-N-acetylmuramoyl-pentapeptide-transferase (326 aa).

10 helical membrane-spanning segments follow: residues 13–33 (ILAPLIMGFLFSIVLGPIFIP), 57–77 (GTPTMGGLIFFIATATAILIM), 85–105 (EMILLYSFLAFGFIGFLDDIL), 121–141 (MILLVLFSVALAWYGYTNVGT), 155–175 (NLGILYIPFIVVYYAAVTNAV), 181–201 (IDGLATSVTVIVLTFFAIIGF), 208–228 (VAVFAIALAGALLGFLKFNAF), 232–252 (IFMGDTGSLALGGVIGTIALM), 257–277 (LFVIIVGGIYLIETLSVIIQV), and 305–325 (VKIVTIFSSITAILCIIGFVA).

This sequence belongs to the glycosyltransferase 4 family. MraY subfamily. Mg(2+) is required as a cofactor.

The protein localises to the cell membrane. It carries out the reaction UDP-N-acetyl-alpha-D-muramoyl-L-alanyl-gamma-D-glutamyl-meso-2,6-diaminopimeloyl-D-alanyl-D-alanine + di-trans,octa-cis-undecaprenyl phosphate = di-trans,octa-cis-undecaprenyl diphospho-N-acetyl-alpha-D-muramoyl-L-alanyl-D-glutamyl-meso-2,6-diaminopimeloyl-D-alanyl-D-alanine + UMP. It functions in the pathway cell wall biogenesis; peptidoglycan biosynthesis. In terms of biological role, catalyzes the initial step of the lipid cycle reactions in the biosynthesis of the cell wall peptidoglycan: transfers peptidoglycan precursor phospho-MurNAc-pentapeptide from UDP-MurNAc-pentapeptide onto the lipid carrier undecaprenyl phosphate, yielding undecaprenyl-pyrophosphoryl-MurNAc-pentapeptide, known as lipid I. The chain is Phospho-N-acetylmuramoyl-pentapeptide-transferase from Clostridium beijerinckii (strain ATCC 51743 / NCIMB 8052) (Clostridium acetobutylicum).